The primary structure comprises 140 residues: Putative esterase MT1895 (140 aa).

This sequence belongs to the thioesterase PaaI family.

The polypeptide is Putative esterase MT1895 (Mycobacterium tuberculosis (strain CDC 1551 / Oshkosh)).